The primary structure comprises 178 residues: Protein GrpE (178 aa).

The protein belongs to the GrpE family. Homodimer.

It localises to the cytoplasm. In terms of biological role, participates actively in the response to hyperosmotic and heat shock by preventing the aggregation of stress-denatured proteins, in association with DnaK and GrpE. It is the nucleotide exchange factor for DnaK and may function as a thermosensor. Unfolded proteins bind initially to DnaJ; upon interaction with the DnaJ-bound protein, DnaK hydrolyzes its bound ATP, resulting in the formation of a stable complex. GrpE releases ADP from DnaK; ATP binding to DnaK triggers the release of the substrate protein, thus completing the reaction cycle. Several rounds of ATP-dependent interactions between DnaJ, DnaK and GrpE are required for fully efficient folding. This chain is Protein GrpE, found in Bordetella avium (strain 197N).